Reading from the N-terminus, the 85-residue chain is Toxin BmKa1 (85 aa).

Positions 1 to 19 (MNYLVFFSLALLLMTGVGS) are cleaved as a signal peptide. The LCN-type CS-alpha/beta domain maps to 21 to 83 (RDGYIADDKN…VPIRVPGKCN (63 aa)). Intrachain disulfides connect Cys-31-Cys-82, Cys-35-Cys-55, Cys-41-Cys-65, and Cys-45-Cys-67.

This sequence belongs to the long (4 C-C) scorpion toxin superfamily. Sodium channel inhibitor family. Alpha subfamily. As to expression, expressed by the venom gland.

The protein localises to the secreted. Alpha toxins bind voltage-independently at site-3 of sodium channels (Nav) and inhibit the inactivation of the activated channels, thereby blocking neuronal transmission. This chain is Toxin BmKa1, found in Olivierus martensii (Manchurian scorpion).